Here is a 547-residue protein sequence, read N- to C-terminus: DNA mismatch repair protein MutL (547 aa).

Belongs to the DNA mismatch repair MutL/HexB family.

In terms of biological role, this protein is involved in the repair of mismatches in DNA. It is required for dam-dependent methyl-directed DNA mismatch repair. May act as a 'molecular matchmaker', a protein that promotes the formation of a stable complex between two or more DNA-binding proteins in an ATP-dependent manner without itself being part of a final effector complex. The sequence is that of DNA mismatch repair protein MutL from Deinococcus radiodurans (strain ATCC 13939 / DSM 20539 / JCM 16871 / CCUG 27074 / LMG 4051 / NBRC 15346 / NCIMB 9279 / VKM B-1422 / R1).